Consider the following 269-residue polypeptide: 2-dehydro-3-deoxyphosphooctonate aldolase (269 aa).

Belongs to the KdsA family.

It localises to the cytoplasm. The enzyme catalyses D-arabinose 5-phosphate + phosphoenolpyruvate + H2O = 3-deoxy-alpha-D-manno-2-octulosonate-8-phosphate + phosphate. The protein operates within carbohydrate biosynthesis; 3-deoxy-D-manno-octulosonate biosynthesis; 3-deoxy-D-manno-octulosonate from D-ribulose 5-phosphate: step 2/3. It functions in the pathway bacterial outer membrane biogenesis; lipopolysaccharide biosynthesis. The protein is 2-dehydro-3-deoxyphosphooctonate aldolase of Chlamydia abortus (strain DSM 27085 / S26/3) (Chlamydophila abortus).